Here is a 302-residue protein sequence, read N- to C-terminus: Acetylglutamate kinase (302 aa).

Substrate contacts are provided by residues 68 to 69, Arg90, and Asn194; that span reads GG.

Belongs to the acetylglutamate kinase family. ArgB subfamily.

It is found in the cytoplasm. The enzyme catalyses N-acetyl-L-glutamate + ATP = N-acetyl-L-glutamyl 5-phosphate + ADP. It participates in amino-acid biosynthesis; L-arginine biosynthesis; N(2)-acetyl-L-ornithine from L-glutamate: step 2/4. Its function is as follows. Catalyzes the ATP-dependent phosphorylation of N-acetyl-L-glutamate. In Acinetobacter baumannii (strain AB307-0294), this protein is Acetylglutamate kinase.